The following is a 430-amino-acid chain: MGQPEGLERFDSPGKGRGLKATRSFALGELLFSCPAYTYVLTDNERGNHCDFCFTRKEGLSKCGKCKQAFYCNVDCQKGDWPMHKLECSSMCSSGQNWCPSETVRLTARILAKQKTQTERTASERFMSVKEFESHLSKLDNEKKELIENDISALHRFYSKNVHNCDNAALEFLFAQVNCNGFTIEDEELSHLGSAIFPDVALMNHSCCPNVIVTYKGTVAEVRAVQEIHAGEEVFTSYIDLLYPTEDRNDRLKDSYFFSCDCRECSTKQKDPAKLELRKLSDPPSPQTVRDMITYARNVVEEFRRAKHYKTPSELLEICELSLDKMGSVFVDSNVYMLHMMYQAMGVCLYMQDWEGALKYGEKIIKPYSKHYPAYSLNVASMWLKLGRLYMGLEKNTIGTKALKKALAIMEIAHGPDHYYIAEIKKELEL.

The SET domain maps to 5–239; it reads EGLERFDSPG…AGEEVFTSYI (235 aa). 15 to 17 is a binding site for S-adenosyl-L-methionine; the sequence is KGR. Zn(2+) contacts are provided by cysteine 50, cysteine 53, cysteine 63, cysteine 66, cysteine 72, cysteine 76, histidine 84, and cysteine 88. The segment at 50–88 adopts an MYND-type zinc-finger fold; that stretch reads CDFCFTRKEGLSKCGKCKQAFYCNVDCQKGDWPMHKLEC. S-adenosyl-L-methionine is bound by residues histidine 135, 204–205, and 256–258; these read NH and YFF.

It belongs to the class V-like SAM-binding methyltransferase superfamily.

It is found in the cytoplasm. Its subcellular location is the cytosol. It localises to the nucleus. The enzyme catalyses L-lysyl(4)-[histone H3] + 3 S-adenosyl-L-methionine = N(6),N(6),N(6)-trimethyl-L-lysyl(4)-[histone H3] + 3 S-adenosyl-L-homocysteine + 3 H(+). It catalyses the reaction L-lysyl-[protein] + S-adenosyl-L-methionine = N(6)-methyl-L-lysyl-[protein] + S-adenosyl-L-homocysteine + H(+). Protein-lysine N-methyltransferase that methylates both histones and non-histone proteins, including p53/TP53 and RB1. Specifically trimethylates histone H3 'Lys-4' (H3K4me3) in vivo. The activity requires interaction with HSP90alpha. Shows even higher methyltransferase activity on p53/TP53. Monomethylates 'Lys-370' of p53/TP53, leading to decreased DNA-binding activity and subsequent transcriptional regulation activity of p53/TP53. Monomethylates RB1 at 'Lys-860'. The chain is N-lysine methyltransferase SMYD2-B (smyd2-b) from Xenopus laevis (African clawed frog).